Here is a 532-residue protein sequence, read N- to C-terminus: L-proline--[L-prolyl-carrier protein] ligase (532 aa).

Positions 510–532 (KTDYRRLGLDAPPRPAAPLGTAR) are disordered.

The protein belongs to the ATP-dependent AMP-binding enzyme family.

It catalyses the reaction holo-[peptidyl-carrier protein] + L-proline + ATP = L-prolyl-[peptidyl-carrier protein] + AMP + diphosphate. Its function is as follows. Involved in the biosynthesis of undecylprodigiosin. Catalyzes the conversion of L-proline to L-prolyl-AMP and the transfer of the L-prolyl group to acyl carrier protein RedO. The chain is L-proline--[L-prolyl-carrier protein] ligase from Streptomyces coelicolor (strain ATCC BAA-471 / A3(2) / M145).